The primary structure comprises 659 residues: Heparin-sulfate lyase (659 aa).

The N-terminal stretch at 1–24 is a signal peptide; the sequence is MTTKIFKRIIVFAVIALSSGNILA. Residue Tyr-294 is the Proton acceptor of the active site.

The protein belongs to the polysaccharide lyase 12 family.

It is found in the periplasm. The enzyme catalyses Elimination of sulfate, appears to act on linkages between N-acetyl-D-glucosamine and uronate. Product is an unsaturated sugar.. In terms of biological role, specifically cleaves heparan sulfate-rich regions of acidic polysaccharides. Does not act on N,O-desulfated glucosamine or N-acetyl-O-sulfated glucosamine linkages. Functions in cleaving metazoan heparan sulfate and providing carbon, nitrogen and sulfate sources for microorganisms. This is Heparin-sulfate lyase (hepC) from Pedobacter heparinus (strain ATCC 13125 / DSM 2366 / CIP 104194 / JCM 7457 / NBRC 12017 / NCIMB 9290 / NRRL B-14731 / HIM 762-3).